The primary structure comprises 137 residues: Acidic phospholipase A2 VP8 (137 aa).

A signal peptide spans Met-1–Gly-16. Cystine bridges form between Cys-41–Cys-130, Cys-43–Cys-59, Cys-58–Cys-110, Cys-64–Cys-137, Cys-65–Cys-103, Cys-72–Cys-96, and Cys-90–Cys-101. Ca(2+) contacts are provided by Tyr-42, Gly-44, and Gly-46. His-62 is a catalytic residue. A Ca(2+)-binding site is contributed by Asp-63. Residue Asp-104 is part of the active site.

It belongs to the phospholipase A2 family. Group II subfamily. D49 sub-subfamily. As to quaternary structure, does not form a complex. Requires Ca(2+) as cofactor. As to expression, expressed by the venom gland.

It is found in the secreted. It carries out the reaction a 1,2-diacyl-sn-glycero-3-phosphocholine + H2O = a 1-acyl-sn-glycero-3-phosphocholine + a fatty acid + H(+). Snake venom phospholipase A2 (PLA2) that is not toxic by itself, but the synergistical mixture of a basic and this acidic protein is lethal. PLA2 catalyzes the calcium-dependent hydrolysis of the 2-acyl groups in 3-sn-phosphoglycerides. The chain is Acidic phospholipase A2 VP8 from Daboia palaestinae (Palestine viper).